The primary structure comprises 229 residues: Endo-1,4-beta-xylanase 1 (229 aa).

The N-terminal stretch at 1–19 (MVAFSSLICALTSIASTLA) is a signal peptide. Positions 20–51 (MPTGLEPESSVNVTERGMYDFVLGAHNDHRRR) are excised as a propeptide. N31 is a glycosylation site (N-linked (GlcNAc...) asparagine). The GH11 domain maps to 42–228 (LGAHNDHRRR…GSGSASQSVS (187 aa)). Substrate is bound at residue Y117. E126 (nucleophile) is an active-site residue. Residues Y128, R160, P164, Q174, and Y209 each contribute to the substrate site. The active-site Proton donor is E215.

It belongs to the glycosyl hydrolase 11 (cellulase G) family.

It localises to the secreted. It catalyses the reaction Endohydrolysis of (1-&gt;4)-beta-D-xylosidic linkages in xylans.. It functions in the pathway glycan degradation; xylan degradation. Functionally, glycoside hydrolase involved in the hydrolysis of xylan, a major plant cell wall hemicellulose made up of 1,4-beta-linked D-xylopyranose residues. Catalyzes the endohydrolysis of the main-chain 1,4-beta-glycosidic bonds connecting the xylose subunits yielding various xylooligosaccharides and xylose. The chain is Endo-1,4-beta-xylanase 1 from Hypocrea jecorina (strain QM6a) (Trichoderma reesei).